Consider the following 375-residue polypeptide: Alcohol dehydrogenase 1C (375 aa).

At serine 2 the chain carries N-acetylserine. The residue at position 23 (serine 23) is a Phosphoserine. Positions 47, 68, 98, 101, 104, 112, and 175 each coordinate Zn(2+). Residues 200-205 (GLGGVG), aspartate 224, lysine 229, isoleucine 270, 293-295 (VGV), 318-320 (AIF), and arginine 370 contribute to the NAD(+) site.

Belongs to the zinc-containing alcohol dehydrogenase family. Dimer of identical or non-identical chains of class I alcohol dehydrogenase: ADH1A, ADH1B, and ADH1C. It depends on Zn(2+) as a cofactor.

It is found in the cytoplasm. It catalyses the reaction a primary alcohol + NAD(+) = an aldehyde + NADH + H(+). It carries out the reaction ethanol + NAD(+) = acetaldehyde + NADH + H(+). In terms of biological role, alcohol dehydrogenase. Exhibits high activity for ethanol oxidation and plays a major role in ethanol catabolism. The sequence is that of Alcohol dehydrogenase 1C (ADH1C) from Homo sapiens (Human).